We begin with the raw amino-acid sequence, 230 residues long: Zein-alpha 19A2 (230 aa).

The signal sequence occupies residues 1-18 (KIFCFLMLLGLSASAATA).

The protein belongs to the zein family.

Functionally, zeins are major seed storage proteins. The polypeptide is Zein-alpha 19A2 (Zea mays (Maize)).